Reading from the N-terminus, the 456-residue chain is Enolase (456 aa).

Q177 lines the (2R)-2-phosphoglycerate pocket. The Proton donor role is filled by E219. Mg(2+)-binding residues include D256, E310, and D337. (2R)-2-phosphoglycerate is bound by residues K362, R391, S392, and K413. K362 functions as the Proton acceptor in the catalytic mechanism.

This sequence belongs to the enolase family. In terms of assembly, homodimer. It depends on Mg(2+) as a cofactor.

The protein localises to the cytoplasm. It is found in the secreted. The protein resides in the cell surface. The catalysed reaction is (2R)-2-phosphoglycerate = phosphoenolpyruvate + H2O. The protein operates within carbohydrate degradation; glycolysis; pyruvate from D-glyceraldehyde 3-phosphate: step 4/5. Functionally, catalyzes the reversible conversion of 2-phosphoglycerate (2-PG) into phosphoenolpyruvate (PEP). It is essential for the degradation of carbohydrates via glycolysis. In terms of biological role, 'Moonlights' as a plasminogen receptor. Binds plasminogen, but no fibronectin binding was observed. Plasminogen binding increases bacterial adherence to host cells; plasmin activity leads to degradation of host extracellular matrix proteins, facilitating bacterial dissemination and disease spread. The polypeptide is Enolase (Mycoplasma pneumoniae (strain ATCC 29342 / M129 / Subtype 1) (Mycoplasmoides pneumoniae)).